The primary structure comprises 183 residues: Transmembrane protein 252 (183 aa).

The next 2 helical transmembrane spans lie at 8–28 and 39–59; these read ILCA…GFFI and LVVA…GIFW.

The protein localises to the membrane. This chain is Transmembrane protein 252 (Tmem252), found in Mus musculus (Mouse).